The primary structure comprises 628 residues: CMP-5'-(3-aminopropyl)phosphonate synthase (628 aa).

The tract at residues 1 to 255 is mobA-like NTP transferase; the sequence is MNENRTFATP…DPGDQRQADF (255 aa). Residues 278–628 are decarboxylase; sequence GVTDHALLYN…TTEGAGRADG (351 aa). Lysine 466 carries the N6-(pyridoxal phosphate)lysine modification.

It in the N-terminal section; belongs to the MobA family. This sequence in the C-terminal section; belongs to the class-I pyridoxal-phosphate-dependent aminotransferase family. Mg(2+) serves as cofactor. The cofactor is pyridoxal 5'-phosphate.

The catalysed reaction is 2-amino-4-phosphonobutanoate + CTP = CMP-5'-(3-amino-3-carboxypropyl)phosphonate + diphosphate. It catalyses the reaction CMP-5'-(3-amino-3-carboxypropyl)phosphonate + H(+) = CMP-5'-(3-aminopropyl)phosphonate + CO2. Its pathway is antibiotic biosynthesis. Functionally, bifunctional cytidylyltransferase/decarboxylase involved in the biosynthesis of the phosphonate antibiotic FR-900098, a potent antimalarial agent that acts as an inhibitor of 1-deoxy-D-xylulose 5-phosphate reductoisomerase (DXR), the first enzyme in the nonmevalonate pathway for isoprenoid biosynthesis. Catalyzes the condensation of 2-amino-4-phosphonobutyrate (2APn) and CTP to form CMP-5'-2APn and then decarboxylates CMP-5'-2APn to yield CMP-5'-(3-aminopropyl)phosphonate (CMP-5'-3APn). In Streptomyces rubellomurinus (strain ATCC 31215), this protein is CMP-5'-(3-aminopropyl)phosphonate synthase.